Reading from the N-terminus, the 505-residue chain is Zinc finger protein 649 (505 aa).

The KRAB domain maps to 8 to 79 (LTLEDVAVDF…EDEIHSPAHP (72 aa)). Residue K112 forms a Glycyl lysine isopeptide (Lys-Gly) (interchain with G-Cter in SUMO2) linkage. 10 C2H2-type zinc fingers span residues 178-200 (HECT…KRIH), 206-228 (HVCS…ERAH), 234-256 (HGCS…ERAH), 262-284 (YGCS…QRIH), 290-312 (HQCS…QRTH), 318-340 (HTCS…QRTH), 346-368 (YGCI…QRYH), 374-396 (FVCP…QKIH), 402-424 (YKCS…HRTH), and 430-452 (YGCD…KRIH). Residues 455–481 (EKRGDSVKVENPSTASHSLSPSEHVQG) form a disordered region. A compositionally biased stretch (polar residues) spans 465-477 (NPSTASHSLSPSE).

The protein belongs to the krueppel C2H2-type zinc-finger protein family. Highly expressed in heart, skeletal muscle, and brain. Lower expression in liver, lung, kidney, pancreas and placenta.

The protein localises to the nucleus. Its function is as follows. Transcriptional repressor. Regulator of transcriptional factor complexes and may suppress SRE and AP-1 transcription activities mediated by growth factor signaling pathways. In Homo sapiens (Human), this protein is Zinc finger protein 649 (ZNF649).